The primary structure comprises 435 residues: DMATS-type prenyltransferase fscG (435 aa).

Arg111, Lys193, Tyr195, Arg259, Lys261, Tyr263, Tyr352, and Tyr423 together coordinate dimethylallyl diphosphate.

The protein belongs to the tryptophan dimethylallyltransferase family.

It participates in secondary metabolite biosynthesis. Functionally, DMATS-type prenyltransferase; part of the fragmented gene cluster that mediates the biosynthesis of fusarochromene, a tryptophan-derived metabolite closely related to a group of mycotoxins including fusarochromanone. Within the pathway, fscG catalyzes the prenylation of the primary alcohol produced by fscA which is necessary for the formation of the chromene ring by the oxidoreductase fscI. The first step of the pathway is the epimerization of L-tryptophan to D-tryptophan in the presence of the NRPS-like tryptophan epimerase fscC. D-tryptophan is subsequently hydroxylated by the tryptophan 6-hydroxylase fscE to yield 6-hydroxytryptophan. The pyrrole ring undergoes cleavaged by the tryptophan 2,3-dioxygenase fscD and is finally converted to 4-hydroxykyrunenine by the hydrolase fscH. The NRPS-like oxidoreductase fscA reduces the carboxyl group to primary alcohol and the DMATS-type prenyltransferase fscG performs prenylation, followed by the formation of a chromene ring catalyzed by the oxidoreductase fscI, which leads to desacetylfusarochromene. Epoxidation by fscF and rearrangement reactions of chromene double bonds convert compound desacetylfusarochromene to fusarochromanones. Although specific acetyltransferases were not found near the fsc gene cluster, several predicted enzymes containing the N-acetyltransferase superfamily domain are present in the genome of F.equiseti. These predicted enzymes may have the potential to convert desacetylfusarochromene to fusarochromene. This is DMATS-type prenyltransferase fscG from Fusarium equiseti (Fusarium scirpi).